A 263-amino-acid chain; its full sequence is Apolipoprotein A-I (263 aa).

The signal sequence occupies residues 1-18; sequence MKAVVLAVAVLFLTGSQA. A run of 2 repeats spans residues 66–87 and 88–109. The tract at residues 66 to 263 is 10 X approximate tandem repeats; the sequence is LKLLDNWDTL…DEVSKKLSAQ (198 aa). Methionine sulfoxide is present on Met108. Residues 110 to 120 form a 3; half-length repeat; it reads KDLVEVKEKVQ. 5 repeat units span residues 121-142, 143-164, 165-186, 187-206, and 207-228. One copy of the 9; half-length repeat lies at 229–239; that stretch reads PALEDLRLGLL. The stretch at 240-263 is repeat 10; sequence PVLESLKASFLSSIDEVSKKLSAQ.

Belongs to the apolipoprotein A1/A4/E family. As to quaternary structure, homodimer. Interacts with APOA1BP and CLU. Component of a sperm activating protein complex (SPAP), consisting of APOA1, an immunoglobulin heavy chain, an immunoglobulin light chain and albumin. Interacts with NDRG1. Interacts with SCGB3A2. Interacts with NAXE and YJEFN3. Glycosylated. Post-translationally, palmitoylated. In terms of processing, phosphorylation sites are present in the extracellular medium.

It is found in the secreted. Functionally, participates in the reverse transport of cholesterol from tissues to the liver for excretion by promoting cholesterol efflux from tissues and by acting as a cofactor for the lecithin cholesterol acyltransferase (LCAT). As part of the SPAP complex, activates spermatozoa motility. The sequence is that of Apolipoprotein A-I (APOA1) from Octodon degus (Degu).